The following is a 183-amino-acid chain: Dermatopontin (183 aa).

Q1 is subject to Pyrrolidone carboxylic acid. The residue at position 5 (Y5) is a Sulfotyrosine. 4 tandem repeats follow at residues 8–61 (PYQQ…ACMP), 52–57 (DRQWNY), 62–117 (TPQS…CCRY), and 107–112 (DREWQF). Positions 8–117 (PYQQYHDYSD…REWQFYCCRY (110 aa)) are 2 X 53-55 AA tandem repeats. 5 disulfides stabilise this stretch: C32/C59, C72/C114, C88/C115, C121/C178, and C125/C171. A 3 X 6 AA tandem repeats of D-R-[EQ]-W-[NQK]-[FY] region spans residues 52 to 168 (DRQWNYACMP…AVERDRQWKF (117 aa)). Y144, Y146, Y148, and Y149 each carry sulfotyrosine. Residues 163 to 168 (DRQWKF) form a 2-3 repeat. At Y176 the chain carries Sulfotyrosine.

The protein belongs to the dermatopontin family. As to quaternary structure, interacts with TGFB1, DCN and collagen. In terms of processing, sulfated on tyrosine residue(s). In terms of tissue distribution, detected in skin, skeletal muscle, heart, lung, articular cartilage, long bone and calvaria. Smaller amounts detected in kidney. Not detected in brain, liver or spleen.

It is found in the secreted. It localises to the extracellular space. The protein localises to the extracellular matrix. In terms of biological role, seems to mediate adhesion by cell surface integrin binding. May serve as a communication link between the dermal fibroblast cell surface and its extracellular matrix environment. Enhances TGFB1 activity. Inhibits cell proliferation. Accelerates collagen fibril formation, and stabilizes collagen fibrils against low-temperature dissociation. This chain is Dermatopontin (DPT), found in Sus scrofa (Pig).